The sequence spans 397 residues: CCA-adding enzyme (397 aa).

Residues Gly-27 and Arg-30 each contribute to the ATP site. The CTP site is built by Gly-27 and Arg-30. Asp-40 and Asp-42 together coordinate Mg(2+). Residues Arg-111, Asp-154, Arg-157, Arg-160, and Arg-163 each contribute to the ATP site. CTP is bound by residues Arg-111, Asp-154, Arg-157, Arg-160, and Arg-163.

Belongs to the tRNA nucleotidyltransferase/poly(A) polymerase family. Bacterial CCA-adding enzyme type 3 subfamily. Homodimer. The cofactor is Mg(2+).

The catalysed reaction is a tRNA precursor + 2 CTP + ATP = a tRNA with a 3' CCA end + 3 diphosphate. It carries out the reaction a tRNA with a 3' CCA end + 2 CTP + ATP = a tRNA with a 3' CCACCA end + 3 diphosphate. Functionally, catalyzes the addition and repair of the essential 3'-terminal CCA sequence in tRNAs without using a nucleic acid template. Adds these three nucleotides in the order of C, C, and A to the tRNA nucleotide-73, using CTP and ATP as substrates and producing inorganic pyrophosphate. tRNA 3'-terminal CCA addition is required both for tRNA processing and repair. Also involved in tRNA surveillance by mediating tandem CCA addition to generate a CCACCA at the 3' terminus of unstable tRNAs. While stable tRNAs receive only 3'-terminal CCA, unstable tRNAs are marked with CCACCA and rapidly degraded. The protein is CCA-adding enzyme of Anoxybacillus flavithermus (strain DSM 21510 / WK1).